Consider the following 222-residue polypeptide: Kinetochore protein Spc25 (222 aa).

Residues 51–86 (RHQRKVGKLQKVLMERREELDKRVSFIEELDRELEA) adopt a coiled-coil conformation.

This sequence belongs to the SPC25 family. In terms of assembly, component of the Ndc80 complex, which is composed of Ndc80, Nuf2 and Spc25.

It localises to the nucleus. The protein localises to the chromosome. Its subcellular location is the centromere. The protein resides in the kinetochore. In terms of biological role, acts as a component of the essential kinetochore-associated Ndc80 complex, which is required for chromosome segregation and spindle checkpoint activity during meiosis and mitosis. Required for kinetochore integrity and the organization of stable microtubule binding sites in the outer plate of the kinetochore. Participates in SAC signaling that responds specifically to disruptions in spindle microtubule dynamics. The NDC80 complex synergistically enhances the affinity of the SKA1 complex for microtubules and may allow the NDC80 complex to track depolymerizing microtubules. This Drosophila mauritiana (Fruit fly) protein is Kinetochore protein Spc25.